The primary structure comprises 293 residues: ATP synthase gamma chain (293 aa).

It belongs to the ATPase gamma chain family. F-type ATPases have 2 components, CF(1) - the catalytic core - and CF(0) - the membrane proton channel. CF(1) has five subunits: alpha(3), beta(3), gamma(1), delta(1), epsilon(1). CF(0) has three main subunits: a, b and c.

The protein resides in the cell inner membrane. In terms of biological role, produces ATP from ADP in the presence of a proton gradient across the membrane. The gamma chain is believed to be important in regulating ATPase activity and the flow of protons through the CF(0) complex. The polypeptide is ATP synthase gamma chain (Allorhizobium ampelinum (strain ATCC BAA-846 / DSM 112012 / S4) (Agrobacterium vitis (strain S4))).